The following is a 411-amino-acid chain: SH3 and cysteine-rich domain-containing protein 2 (411 aa).

Residues 1–29 are disordered; sequence MTEMSEKENEPDDAATHSPPGTVSALQET. Over residues 19 to 29 the composition is skewed to polar residues; the sequence is PPGTVSALQET. Serine 48 carries the post-translational modification Phosphoserine. The tract at residues 64-95 is disordered; the sequence is TEVLLTPPTPLPPPSPPPTASDRGLATPSPSP. The span at 70–82 shows a compositional bias: pro residues; sequence PPTPLPPPSPPPT. Residues 110–161 form a Phorbol-ester/DAG-type zinc finger; the sequence is LHSFQEHVFKRASPCELCHQLIVGNSKQGLRCKMCKVSVHLWCSEEISHQQC. Disordered regions lie at residues 174–203 and 219–288; these read SSPL…KVDP and RSSF…ATLR. The span at 219 to 232 shows a compositional bias: low complexity; it reads RSSFSSTSESPTRS. 2 consecutive SH3 domains span residues 292 to 351 and 354 to 411; these read GPMY…RVRP and NVWR…LTEI.

Interacts (via SH3 domains) with CACNA1S. Interacts (via SH3 domains) with CACNA1C. Has much lower affinity for CACNA1C than for CACNA1S.

Its subcellular location is the cytoplasm. The protein localises to the cytosol. The protein resides in the cell membrane. It is found in the sarcolemma. Its function is as follows. Plays a redundant role in promoting the expression of calcium channel CACNA1S at the cell membrane, and thereby contributes to increased channel activity. Slows down the inactivation rate of the calcium channel CACNA1C. This chain is SH3 and cysteine-rich domain-containing protein 2 (STAC2), found in Homo sapiens (Human).